A 230-amino-acid chain; its full sequence is Movement and silencing protein TGBp1 (230 aa).

One can recognise a (+)RNA virus helicase ATP-binding domain in the interval 1–114 (MDSIINALTS…GLALRPHFIK (114 aa)). The (+)RNA virus helicase C-terminal domain maps to 115 to 230 (SVSHRLCPAT…VRSPPPHPSH (116 aa)).

The protein belongs to the Tymovirales TGBp1 protein family. As to quaternary structure, homodimer and homooligomer. Interacts with capsid protein. Interacts with host AGO1; this interaction targets the host protein for degradation, thereby suppressing the antiviral RNA silencing.

The protein resides in the host cytoplasm. Its function is as follows. Transports viral genome to neighboring plant cells directly through plasmosdesmata, without any budding. The movement protein allows efficient cell to cell propagation, by bypassing the host cell wall barrier. Increases plasmodesma size exclusion limit. Acts as a suppressor of RNA-mediated gene silencing, also known as post-transcriptional gene silencing (PTGS), a mechanism of plant viral defense that limits the accumulation of viral RNAs. This is Movement and silencing protein TGBp1 from Plantago asiatica (P1AMV).